We begin with the raw amino-acid sequence, 192 residues long: Casparian strip membrane protein 4 (192 aa).

Residues 1-29 are Cytoplasmic-facing; sequence MTKDVVIEHGESSKAPLVPAPVAAGVGRA. Residues 30–50 traverse the membrane as a helical segment; it reads VSIADVFLRFLSIVATIASAI. At 51-79 the chain is on the extracellular side; the sequence is SMGTTNETLPFFTQFIQFEAKYSDLPSFT. The N-linked (GlcNAc...) asparagine glycan is linked to asparagine 56. The chain crosses the membrane as a helical span at residues 80–100; sequence FFVAANAVVCTYLVLSIPLSI. The Cytoplasmic portion of the chain corresponds to 101–112; it reads VHIIRPRARYSR. A helical transmembrane segment spans residues 113 to 133; the sequence is LILVFFDAVMLALLTAGASAA. Topologically, residues 134–166 are extracellular; sequence AAIVYLAHKGNVRANWFAICQQFDSFCERISGS. A helical membrane pass occupies residues 167–187; the sequence is LIGSFAAMVLLIVLIFLSAFA. The Cytoplasmic segment spans residues 188–192; sequence LARRH.

It belongs to the Casparian strip membrane proteins (CASP) family. In terms of assembly, homodimer and heterodimers.

The protein localises to the cell membrane. In terms of biological role, regulates membrane-cell wall junctions and localized cell wall deposition. Required for establishment of the Casparian strip membrane domain (CSD) and the subsequent formation of Casparian strips, a cell wall modification of the root endodermis that determines an apoplastic barrier between the intraorganismal apoplasm and the extraorganismal apoplasm and prevents lateral diffusion. The sequence is that of Casparian strip membrane protein 4 from Sorghum bicolor (Sorghum).